We begin with the raw amino-acid sequence, 404 residues long: Cysteine desulfurase IscS (404 aa).

Pyridoxal 5'-phosphate-binding positions include 75-76 (AT), N155, Q183, and 203-205 (SAH). Residue K206 is modified to N6-(pyridoxal phosphate)lysine. T243 contributes to the pyridoxal 5'-phosphate binding site. Residue C328 is the Cysteine persulfide intermediate of the active site. Position 328 (C328) interacts with [2Fe-2S] cluster.

The protein belongs to the class-V pyridoxal-phosphate-dependent aminotransferase family. NifS/IscS subfamily. As to quaternary structure, homodimer. Forms a heterotetramer with IscU, interacts with other sulfur acceptors. Pyridoxal 5'-phosphate serves as cofactor.

It localises to the cytoplasm. It catalyses the reaction (sulfur carrier)-H + L-cysteine = (sulfur carrier)-SH + L-alanine. Its pathway is cofactor biosynthesis; iron-sulfur cluster biosynthesis. Its function is as follows. Master enzyme that delivers sulfur to a number of partners involved in Fe-S cluster assembly, tRNA modification or cofactor biosynthesis. Catalyzes the removal of elemental sulfur atoms from cysteine to produce alanine. Functions as a sulfur delivery protein for Fe-S cluster synthesis onto IscU, an Fe-S scaffold assembly protein, as well as other S acceptor proteins. The protein is Cysteine desulfurase IscS of Pseudomonas fluorescens (strain Pf0-1).